The chain runs to 309 residues: Pseudouridine-5'-phosphate glycosidase 2 (309 aa).

The active-site Proton donor is E26. Residues K87 and V107 each coordinate substrate. D139 is a Mn(2+) binding site. 141-143 (SAD) contacts substrate. K160 functions as the Nucleophile in the catalytic mechanism.

This sequence belongs to the pseudouridine-5'-phosphate glycosidase family. Homotrimer. The cofactor is Mn(2+).

The enzyme catalyses D-ribose 5-phosphate + uracil = psi-UMP + H2O. Its function is as follows. Catalyzes the reversible cleavage of pseudouridine 5'-phosphate (PsiMP) to ribose 5-phosphate and uracil. Functions biologically in the cleavage direction, as part of a pseudouridine degradation pathway. The protein is Pseudouridine-5'-phosphate glycosidase 2 of Rhizobium johnstonii (strain DSM 114642 / LMG 32736 / 3841) (Rhizobium leguminosarum bv. viciae).